The sequence spans 141 residues: Cystatin (141 aa).

An N-terminal signal peptide occupies residues 1 to 26 (MVHFQLPVAAPLCLLCALLLLPSATM). A Cystatin domain is found at 29–129 (GGLSPRSVSD…CHFQVWSRPW (101 aa)). Residues 73–77 (QVVAG) carry the Secondary area of contact motif. Disulfide bonds link C91–C107 and C120–C140.

Belongs to the cystatin family. As to expression, expressed at a low level by the venom gland (at protein level).

The protein resides in the secreted. In terms of biological role, inhibits various C1 cysteine proteases including cathepsin L, papain and cathepsin B. This protein has no toxic activity and its function in the venom is unknown. It may play a role as a housekeeping or regulatory protein. The polypeptide is Cystatin (Naja kaouthia (Monocled cobra)).